An 84-amino-acid polypeptide reads, in one-letter code: Cell division topological specificity factor (84 aa).

This sequence belongs to the MinE family.

Its function is as follows. Prevents the cell division inhibition by proteins MinC and MinD at internal division sites while permitting inhibition at polar sites. This ensures cell division at the proper site by restricting the formation of a division septum at the midpoint of the long axis of the cell. This is Cell division topological specificity factor from Granulibacter bethesdensis (strain ATCC BAA-1260 / CGDNIH1).